A 942-amino-acid chain; its full sequence is ATP-dependent RNA helicase DDX42 (942 aa).

Gly residues predominate over residues 1-18; it reads MNWNKGGPGTKRGFGFGG. The tract at residues 1–114 is disordered; the sequence is MNWNKGGPGT…KPIDSDSDDD (114 aa). Lysine 5 bears the N6-acetyllysine mark. At arginine 12 the chain carries Omega-N-methylarginine. A compositionally biased stretch (low complexity) spans 35–52; the sequence is SHSAFGATSSSSGFGKSA. Serine 58 carries the phosphoserine modification. A compositionally biased stretch (acidic residues) spans 70–84; the sequence is DEENAYFEDEEEDSS. Residues serine 96, serine 104, serine 109, and serine 111 each carry the phosphoserine modification. Residues 116–157 adopt a coiled-coil conformation; sequence LEAFMAEVEDQAARDMKRLEEKDKERKNVKGIRDDIEEEDDQ. The tract at residues 182-203 is disordered; sequence EYDSDGNPIAPTKKIIDPLPPI. Serine 185 bears the Phosphoserine mark. A Q motif motif is present at residues 253-281; the sequence is SSFAHFGFDEQLMHQIRKSEYTQPTPIQC. Residues 284–459 enclose the Helicase ATP-binding domain; sequence VPVALSGRDM…RDILIDPIRV (176 aa). 297 to 304 provides a ligand contact to ATP; it reads AKTGSGKT. The DEAD box signature appears at 407–410; it reads DEAD. One can recognise a Helicase C-terminal domain in the interval 487-632; that stretch reads WLTRRLVEFT…HVSKELLDLA (146 aa). 2 stretches are compositionally biased toward polar residues: residues 737–760 and 786–798; these read LNSV…TSAT and GVNN…NSRE. Disordered regions lie at residues 737 to 762 and 783 to 942; these read LNSV…ATKG and GAQG…RWDS. Residues 738 to 833 are necessary for interaction with TP53BP2; it reads NSVPTNSAQQ…TGNRHSDSPR (96 aa). Phosphoserine is present on serine 754. Basic and acidic residues predominate over residues 820–924; it reads SHGETGNRHS…KVDSKTDKTA (105 aa). A Glycyl lysine isopeptide (Lys-Gly) (interchain with G-Cter in SUMO2) cross-link involves residue lysine 899.

It belongs to the DEAD box helicase family. DDX42 subfamily. Transient component of the SF3B subcomplex of the 17S U2 SnRNP complex. Interacts (via the C-terminus) with TP53BP2; the interaction is not inhibitied by TP53BP2 ubiquitination and is independent of p53/TP53.

The protein resides in the cytoplasm. It is found in the nucleus. The enzyme catalyses ATP + H2O = ADP + phosphate + H(+). In terms of biological role, ATP-dependent RNA helicase that binds to partially double-stranded RNAs (dsRNAs) in order to unwind RNA secondary structures. Unwinding is promoted in the presence of single-strand binding proteins. Also mediates RNA duplex formation thereby displacing the single-strand RNA binding protein. ATP and ADP modulate its activity: ATP binding and hydrolysis by DDX42 triggers RNA strand separation, whereas the ADP-bound form of the protein triggers annealing of complementary RNA strands. Required for assembly of the 17S U2 SnRNP complex of the spliceosome, a large ribonucleoprotein complex that removes introns from transcribed pre-mRNAs: DDX42 associates transiently with the SF3B subcomplex of the 17S U2 SnRNP complex and is released after fulfilling its role in the assembly of 17S U2 SnRNP. Involved in the survival of cells by interacting with TP53BP2 and thereby counteracting the apoptosis-stimulating activity of TP53BP2. Relocalizes TP53BP2 to the cytoplasm. The protein is ATP-dependent RNA helicase DDX42 (DDX42) of Pongo abelii (Sumatran orangutan).